The following is a 308-amino-acid chain: MIGAGPVGLFAAYFAHLHGLKTVILESLNEPGGQPEMLYPFKKILDIPVFNEITAADLTKRLLANLTDQDLVTGHKVSQLEKTDEFVIDGEYQVRSIIVATGNGAFKAKKFPLKATPEAEDHIHYFFKNPDLFAGQKIGIFGGGDTALDWAQELSQIADVTLVHRRDQFRGMESSVENLKADQKVTLKTPYLPKSMQVEKGQLEISLKMVGGDEVTQETFDQILVAYGFRADNRFVSKWGVDLDQGLIAVDRSMQTSVPGIYAIGDSCGYPGRVPVIGIGFGEAQIAVNAIMQDLFPEKSLTIHSTSI.

Residues Glu26, Gln34, Tyr39, Val77, Phe106, Asp266, and Thr306 each coordinate FAD.

The protein belongs to the ferredoxin--NADP reductase type 2 family. As to quaternary structure, homodimer. Requires FAD as cofactor.

The catalysed reaction is 2 reduced [2Fe-2S]-[ferredoxin] + NADP(+) + H(+) = 2 oxidized [2Fe-2S]-[ferredoxin] + NADPH. In Lactobacillus delbrueckii subsp. bulgaricus (strain ATCC 11842 / DSM 20081 / BCRC 10696 / JCM 1002 / NBRC 13953 / NCIMB 11778 / NCTC 12712 / WDCM 00102 / Lb 14), this protein is Ferredoxin--NADP reductase.